Reading from the N-terminus, the 581-residue chain is Arginine--tRNA ligase (581 aa).

A 'HIGH' region motif is present at residues 122 to 132; the sequence is PNVAKPMHVGH.

Belongs to the class-I aminoacyl-tRNA synthetase family. In terms of assembly, monomer.

The protein resides in the cytoplasm. It carries out the reaction tRNA(Arg) + L-arginine + ATP = L-arginyl-tRNA(Arg) + AMP + diphosphate. The sequence is that of Arginine--tRNA ligase from Francisella tularensis subsp. novicida (strain U112).